Consider the following 295-residue polypeptide: Mycothiol acetyltransferase (295 aa).

Glu-30 is a binding site for 1D-myo-inositol 2-(L-cysteinylamino)-2-deoxy-alpha-D-glucopyranoside. 62–64 (LVV) contacts acetyl-CoA. The region spanning 137 to 295 (VTVRAFRADS…DDDTHVQYRR (159 aa)) is the N-acetyltransferase domain. Residues Glu-165, Lys-209, and Glu-227 each contribute to the 1D-myo-inositol 2-(L-cysteinylamino)-2-deoxy-alpha-D-glucopyranoside site. Acetyl-CoA is bound by residues 231–233 (VGI) and 238–244 (QGRGLGK). 1D-myo-inositol 2-(L-cysteinylamino)-2-deoxy-alpha-D-glucopyranoside is bound at residue Tyr-265.

This sequence belongs to the acetyltransferase family. MshD subfamily. In terms of assembly, monomer.

It carries out the reaction 1D-myo-inositol 2-(L-cysteinylamino)-2-deoxy-alpha-D-glucopyranoside + acetyl-CoA = mycothiol + CoA + H(+). In terms of biological role, catalyzes the transfer of acetyl from acetyl-CoA to desacetylmycothiol (Cys-GlcN-Ins) to form mycothiol. The sequence is that of Mycothiol acetyltransferase from Nocardioides sp. (strain ATCC BAA-499 / JS614).